The sequence spans 292 residues: 4-diphosphocytidyl-2-C-methyl-D-erythritol kinase (292 aa).

Lysine 20 is a catalytic residue. ATP is bound at residue 103–113; it reads PMGGGIGGGSS. The active site involves aspartate 145.

It belongs to the GHMP kinase family. IspE subfamily.

The enzyme catalyses 4-CDP-2-C-methyl-D-erythritol + ATP = 4-CDP-2-C-methyl-D-erythritol 2-phosphate + ADP + H(+). Its pathway is isoprenoid biosynthesis; isopentenyl diphosphate biosynthesis via DXP pathway; isopentenyl diphosphate from 1-deoxy-D-xylulose 5-phosphate: step 3/6. In terms of biological role, catalyzes the phosphorylation of the position 2 hydroxy group of 4-diphosphocytidyl-2C-methyl-D-erythritol. The sequence is that of 4-diphosphocytidyl-2-C-methyl-D-erythritol kinase from Cupriavidus taiwanensis (strain DSM 17343 / BCRC 17206 / CCUG 44338 / CIP 107171 / LMG 19424 / R1) (Ralstonia taiwanensis (strain LMG 19424)).